We begin with the raw amino-acid sequence, 436 residues long: GDP-mannose 6-dehydrogenase (436 aa).

Positions 10, 11, 30, 35, 86, and 124 each coordinate NAD(+). GDP-alpha-D-mannuronate-binding residues include Glu161, Lys210, Asn214, His217, Asn225, Tyr256, Tyr257, Arg259, and Gly265. Cys268 is an active-site residue. Lys271 contributes to the NAD(+) binding site. Lys324 lines the GDP-alpha-D-mannuronate pocket. Arg331 lines the NAD(+) pocket.

It belongs to the UDP-glucose/GDP-mannose dehydrogenase family.

It catalyses the reaction GDP-alpha-D-mannose + 2 NAD(+) + H2O = GDP-alpha-D-mannuronate + 2 NADH + 3 H(+). It functions in the pathway glycan biosynthesis; alginate biosynthesis. Catalyzes the oxidation of guanosine diphospho-D-mannose (GDP-D-mannose) to GDP-D-mannuronic acid, a precursor for alginate polymerization. The alginate layer causes a mucoid phenotype and is essential for cyst formation. In Azotobacter vinelandii, this protein is GDP-mannose 6-dehydrogenase (algD).